Reading from the N-terminus, the 164-residue chain is 2-C-methyl-D-erythritol 2,4-cyclodiphosphate synthase (164 aa).

The a divalent metal cation site is built by Asp8 and His10. 4-CDP-2-C-methyl-D-erythritol 2-phosphate contacts are provided by residues 8–10 and 34–35; these read DVH and HS. Residue His42 participates in a divalent metal cation binding. Residues 56 to 58, 132 to 135, Phe139, and Lys142 contribute to the 4-CDP-2-C-methyl-D-erythritol 2-phosphate site; these read DIG and TTEE.

Belongs to the IspF family. Homotrimer. The cofactor is a divalent metal cation.

It carries out the reaction 4-CDP-2-C-methyl-D-erythritol 2-phosphate = 2-C-methyl-D-erythritol 2,4-cyclic diphosphate + CMP. It functions in the pathway isoprenoid biosynthesis; isopentenyl diphosphate biosynthesis via DXP pathway; isopentenyl diphosphate from 1-deoxy-D-xylulose 5-phosphate: step 4/6. In terms of biological role, involved in the biosynthesis of isopentenyl diphosphate (IPP) and dimethylallyl diphosphate (DMAPP), two major building blocks of isoprenoid compounds. Catalyzes the conversion of 4-diphosphocytidyl-2-C-methyl-D-erythritol 2-phosphate (CDP-ME2P) to 2-C-methyl-D-erythritol 2,4-cyclodiphosphate (ME-CPP) with a corresponding release of cytidine 5-monophosphate (CMP). The sequence is that of 2-C-methyl-D-erythritol 2,4-cyclodiphosphate synthase from Clostridium kluyveri (strain NBRC 12016).